We begin with the raw amino-acid sequence, 727 residues long: MDKKECGFSIDDFLYAVEGGNTISKWWPHRLNLKILQQNNPDLVPFDKNFNYREEFSKLDYFELKEDIRRIMRESQEWWPADYGHYGPLFIRMAWHSAGTYRIIDGKGGANGGNQRFAPVNSWPDNVNLDRARRLLWPVKKKYGNKISWADLMILAGNVALEDMGFKTIGFGGGREDIWEPEIDTYWGPETEWLADMRHSEEGKIKGPLAAVQMGLIYVNPEGPNGEPDVLGAAKDIKESFGKMGMSIEETVALIAGGHTFGKCHGAADPSKYLGPEPEAAPIEQQGLGWKNSYGTGKGKDTITSGLEGAWTPTPIKWDNSFLRILFKYEWNLQKSPAGAWQWVAVNPDREDLVPDAHIPGKYHPPIMLTTDLALKLDPELSEVSKRFLEDPEYFRDAFAKAWFKLTHRDLGPKWRYLGPEVPEEDFIWQDPIPEINYQLIDQDDIKNLKEKILKSDATVTELVYTAWSAASTFRKSDRRGGVNGGRIALEPQISWEVNKTHVPKVLKILNEIKEDFNKQSSDKKVSLADLIVLAGCAAVEEAIKRAGFDIQVPFRPGRNDTTQELTDIKSFSFLEPVADGFRNYIKPECDIPEEYLLIDKADQLNLTVPQMCVLVGGLRVLGANYDSTDYGVFTDNVGTLSNDFFVNLLDMSIVWKPVRVNNRDIFEGYDRKTGDLVYRGTRVDLIFGSNSELRAQAEFYAQDDNREKFIRDFVEAWDKVMNLDIT.

Residues 95-218 (WHSAGTYRII…LAAVQMGLIY (124 aa)) constitute a cross-link (tryptophyl-tyrosyl-methioninium (Trp-Tyr) (with M-244)). H96 serves as the catalytic Proton acceptor. Positions 218-244 (YVNPEGPNGEPDVLGAAKDIKESFGKM) form a cross-link, tryptophyl-tyrosyl-methioninium (Tyr-Met) (with W-95). Heme b is bound at residue H259.

The protein belongs to the peroxidase family. Peroxidase/catalase subfamily. In terms of assembly, homodimer or homotetramer. It depends on heme b as a cofactor. Formation of the three residue Trp-Tyr-Met cross-link is important for the catalase, but not the peroxidase activity of the enzyme.

It carries out the reaction H2O2 + AH2 = A + 2 H2O. The catalysed reaction is 2 H2O2 = O2 + 2 H2O. In terms of biological role, bifunctional enzyme with both catalase and broad-spectrum peroxidase activity. This is Catalase-peroxidase from Persephonella marina (strain DSM 14350 / EX-H1).